The following is a 275-amino-acid chain: Formamidopyrimidine-DNA glycosylase (275 aa).

Catalysis depends on proline 2, which acts as the Schiff-base intermediate with DNA. Residue glutamate 3 is the Proton donor of the active site. The active-site Proton donor; for beta-elimination activity is the lysine 58. The DNA site is built by histidine 91 and arginine 110. The segment at 238 to 272 (QVYGQTGKPCPRCGQAIVKLKVGGRGTHICPKCQK) adopts an FPG-type zinc-finger fold. The active-site Proton donor; for delta-elimination activity is the arginine 262.

It belongs to the FPG family. Monomer. Zn(2+) serves as cofactor.

The catalysed reaction is Hydrolysis of DNA containing ring-opened 7-methylguanine residues, releasing 2,6-diamino-4-hydroxy-5-(N-methyl)formamidopyrimidine.. The enzyme catalyses 2'-deoxyribonucleotide-(2'-deoxyribose 5'-phosphate)-2'-deoxyribonucleotide-DNA = a 3'-end 2'-deoxyribonucleotide-(2,3-dehydro-2,3-deoxyribose 5'-phosphate)-DNA + a 5'-end 5'-phospho-2'-deoxyribonucleoside-DNA + H(+). In terms of biological role, involved in base excision repair of DNA damaged by oxidation or by mutagenic agents. Acts as a DNA glycosylase that recognizes and removes damaged bases. Has a preference for oxidized purines, such as 7,8-dihydro-8-oxoguanine (8-oxoG). Has AP (apurinic/apyrimidinic) lyase activity and introduces nicks in the DNA strand. Cleaves the DNA backbone by beta-delta elimination to generate a single-strand break at the site of the removed base with both 3'- and 5'-phosphates. In Streptococcus pyogenes serotype M28 (strain MGAS6180), this protein is Formamidopyrimidine-DNA glycosylase.